Reading from the N-terminus, the 1392-residue chain is DNA-directed RNA polymerase subunit beta (1392 aa).

A disordered region spans residues 1372-1392 (LSSYAEEDPDEGPEALPEAAE).

It belongs to the RNA polymerase beta chain family. As to quaternary structure, the RNAP catalytic core consists of 2 alpha, 1 beta, 1 beta' and 1 omega subunit. When a sigma factor is associated with the core the holoenzyme is formed, which can initiate transcription.

It catalyses the reaction RNA(n) + a ribonucleoside 5'-triphosphate = RNA(n+1) + diphosphate. Functionally, DNA-dependent RNA polymerase catalyzes the transcription of DNA into RNA using the four ribonucleoside triphosphates as substrates. This is DNA-directed RNA polymerase subunit beta from Sphingopyxis alaskensis (strain DSM 13593 / LMG 18877 / RB2256) (Sphingomonas alaskensis).